The primary structure comprises 592 residues: Arginine--tRNA ligase (592 aa).

Positions 134–144 (ANPTGPLHVGH) match the 'HIGH' region motif.

Belongs to the class-I aminoacyl-tRNA synthetase family. Monomer.

It is found in the cytoplasm. It carries out the reaction tRNA(Arg) + L-arginine + ATP = L-arginyl-tRNA(Arg) + AMP + diphosphate. This Coxiella burnetii (strain CbuG_Q212) (Coxiella burnetii (strain Q212)) protein is Arginine--tRNA ligase.